The following is a 386-amino-acid chain: Cytochrome b (386 aa).

Helical transmembrane passes span 32 to 52, 76 to 98, 113 to 133, and 179 to 199; these read LGSL…FLAM, YLIR…AHIG, VWVI…LGYC, and FFAL…MHLM. Residues His-82 and His-96 each contribute to the heme b site. Residues His-183 and His-197 each contribute to the heme b site. His-202 lines the a ubiquinone pocket. The next 4 helical transmembrane spans lie at 225 to 245, 289 to 309, 321 to 341, and 348 to 368; these read FVFK…LFVF, LGGV…PVTD, ISKT…QLGQ, and FIQL…FIVP.

It belongs to the cytochrome b family. In terms of assembly, fungal cytochrome b-c1 complex contains 10 subunits; 3 respiratory subunits, 2 core proteins and 5 low-molecular weight proteins. Cytochrome b-c1 complex is a homodimer. It depends on heme b as a cofactor.

Its subcellular location is the mitochondrion inner membrane. Its function is as follows. Component of the ubiquinol-cytochrome c reductase complex (complex III or cytochrome b-c1 complex) that is part of the mitochondrial respiratory chain. The b-c1 complex mediates electron transfer from ubiquinol to cytochrome c. Contributes to the generation of a proton gradient across the mitochondrial membrane that is then used for ATP synthesis. This chain is Cytochrome b (COB), found in Wickerhamomyces canadensis (Yeast).